Reading from the N-terminus, the 105-residue chain is DNA-directed RNA polymerase subunit omega (105 aa).

This sequence belongs to the RNA polymerase subunit omega family. The RNAP catalytic core consists of 2 alpha, 1 beta, 1 beta' and 1 omega subunit. When a sigma factor is associated with the core the holoenzyme is formed, which can initiate transcription.

The catalysed reaction is RNA(n) + a ribonucleoside 5'-triphosphate = RNA(n+1) + diphosphate. In terms of biological role, promotes RNA polymerase assembly. Latches the N- and C-terminal regions of the beta' subunit thereby facilitating its interaction with the beta and alpha subunits. In Streptococcus uberis (strain ATCC BAA-854 / 0140J), this protein is DNA-directed RNA polymerase subunit omega.